The following is a 371-amino-acid chain: Zygote-specific protein 3 (371 aa).

The signal sequence occupies residues 1-24 (MLRSAGRVAAVALLALFALGCVSA). N-linked (GlcNAc...) asparagine glycosylation is present at Asn-41. ANK repeat units lie at residues 62-91 (TRRL…LARV) and 94-123 (GTTT…DPNA). 2 consecutive WW domains span residues 159–187 (EPGA…WAVP) and 283–313 (YATP…WELP).

Its subcellular location is the endoplasmic reticulum lumen. Functionally, may have a role in the remodeling of the endoplasmic reticulum upon zygote formation. This is Zygote-specific protein 3 (ZYS3) from Chlamydomonas reinhardtii (Chlamydomonas smithii).